We begin with the raw amino-acid sequence, 342 residues long: Phosphoribosylformylglycinamidine cyclo-ligase (342 aa).

It belongs to the AIR synthase family.

The protein resides in the cytoplasm. The catalysed reaction is 2-formamido-N(1)-(5-O-phospho-beta-D-ribosyl)acetamidine + ATP = 5-amino-1-(5-phospho-beta-D-ribosyl)imidazole + ADP + phosphate + H(+). Its pathway is purine metabolism; IMP biosynthesis via de novo pathway; 5-amino-1-(5-phospho-D-ribosyl)imidazole from N(2)-formyl-N(1)-(5-phospho-D-ribosyl)glycinamide: step 2/2. The polypeptide is Phosphoribosylformylglycinamidine cyclo-ligase (Staphylococcus saprophyticus subsp. saprophyticus (strain ATCC 15305 / DSM 20229 / NCIMB 8711 / NCTC 7292 / S-41)).